A 314-amino-acid polypeptide reads, in one-letter code: Probable cell division protein WhiA (314 aa).

The H-T-H motif DNA-binding region spans 274 to 308 (SLKELGEMISTGPISKSGVNHRLRKLNELADKIRS).

It belongs to the WhiA family.

In terms of biological role, involved in cell division and chromosome segregation. The sequence is that of Probable cell division protein WhiA from Staphylococcus haemolyticus (strain JCSC1435).